A 132-amino-acid polypeptide reads, in one-letter code: Small ribosomal subunit protein uS11 (132 aa).

This sequence belongs to the universal ribosomal protein uS11 family. Part of the 30S ribosomal subunit. Interacts with proteins S7 and S18. Binds to IF-3.

Located on the platform of the 30S subunit, it bridges several disparate RNA helices of the 16S rRNA. Forms part of the Shine-Dalgarno cleft in the 70S ribosome. This chain is Small ribosomal subunit protein uS11, found in Clostridium botulinum (strain 657 / Type Ba4).